The following is a 185-amino-acid chain: Ribosome-recycling factor (185 aa).

This sequence belongs to the RRF family.

The protein resides in the cytoplasm. In terms of biological role, responsible for the release of ribosomes from messenger RNA at the termination of protein biosynthesis. May increase the efficiency of translation by recycling ribosomes from one round of translation to another. The sequence is that of Ribosome-recycling factor from Edwardsiella ictaluri (strain 93-146).